The chain runs to 1041 residues: Sarcoplasmic/endoplasmic reticulum calcium ATPase 2 (1041 aa).

The Cytoplasmic portion of the chain corresponds to 1–48 (MENAHTKTVEEVLAYFGVNESTGLSLEQVKKLKEKWGSNELPAEEGKT). Residues 49-69 (LLELVIEQFEDLLVRILLLAA) traverse the membrane as a helical segment. Residues 70–89 (CISFVLAWFEEGEETITAFV) are Lumenal-facing. The helical transmembrane segment at 90–110 (EPFVILLILVANAIVGVWQER) threads the bilayer. At 111 to 253 (NAENAIEALK…QERTPLQQKL (143 aa)) the chain is on the cytoplasmic side. Residues 254–273 (DEFGEQLSKVISLICIAVWI) form a helical membrane-spanning segment. At 274-295 (INIGHFNDPVHGGSWIRGAIYY) the chain is on the lumenal side. Residues 296–313 (FKIAVALAVAAIPEGLPA) form a helical membrane-spanning segment. Residues Val-304, Ala-305, Ile-307, and Glu-309 each contribute to the Ca(2+) site. Residues 314-756 (VITTCLALGT…EEGRAIYNNM (443 aa)) lie on the Cytoplasmic side of the membrane. Asp-351 serves as the catalytic 4-aspartylphosphate intermediate. Residues Asp-351 and Thr-353 each coordinate Mg(2+). ATP-binding residues include Thr-353, Glu-442, Arg-489, Lys-514, Arg-559, Thr-624, Gly-625, Asp-626, Arg-677, and Lys-683. Asp-702 is a binding site for Mg(2+). Residue Asn-705 coordinates ATP. Residues 757-776 (KQFIRYLISSNVGEVVCIFL) traverse the membrane as a helical segment. Asn-767 and Glu-770 together coordinate Ca(2+). At 777–786 (TAALGFPEAL) the chain is on the lumenal side. Residues 787–807 (IPVQLLWVNLVTDGLPATALG) form a helical membrane-spanning segment. The tract at residues 787-807 (IPVQLLWVNLVTDGLPATALG) is interaction with PLN. Ca(2+)-binding residues include Asn-795, Thr-798, and Asp-799. The Cytoplasmic portion of the chain corresponds to 808-827 (FNPPDLDIMNKPPRNPKEPL). The helical transmembrane segment at 828–850 (ISGWLFFRYLAIGCYVGAATVGA) threads the bilayer. Topologically, residues 851–896 (AAWWFIAADGGPRVTFYQLSHFLQCKEDNPDFSGVDCVVFESPYPM) are lumenal. A disulfide bridge connects residues Cys-875 and Cys-887. A helical transmembrane segment spans residues 897–916 (TMALSVLVTIEMCNALNSLS). Glu-907 contributes to the Ca(2+) binding site. Over 917 to 929 (ENQSLMRMPPWEN) the chain is Cytoplasmic. The chain crosses the membrane as a helical span at residues 930–948 (IWLVGAICLSMSLHFLILY). The segment at 931–942 (WLVGAICLSMSL) is interaction with PLN. The Lumenal portion of the chain corresponds to 949–963 (VEPLPIIFQITPLNV). Residues 964–984 (TQWLMVLKISLPVILLDETLK) traverse the membrane as a helical segment. The Cytoplasmic segment spans residues 985–1041 (YVARNYLEPGKDSVQPATKPCSLSACTEGVSWPFVFITLPLVIWLYSTDTNFSDMFW).

This sequence belongs to the cation transport ATPase (P-type) (TC 3.A.3) family. Type IIA subfamily. As to quaternary structure, interacts with sarcolipin (SLN). Interacts with phospholamban (PLN). Interacts with myoregulin (MRLN). Interacts with DWORF. Interacts with TMX2. The cofactor is Mg(2+). Only isoform 2 is detected in heart, while both isoforms are expressed in brain, with isoform 2 being predominant.

It is found in the endoplasmic reticulum membrane. The protein localises to the sarcoplasmic reticulum membrane. The enzyme catalyses Ca(2+)(in) + ATP + H2O = Ca(2+)(out) + ADP + phosphate + H(+). Reversibly inhibited by phospholamban (PLN) at low calcium concentrations. Inhibited by sarcolipin (SLN) and myoregulin (MRLN). Enhanced by DWORF; DWORF increases activity by displacing sarcolipin (SLN), phospholamban (PLN) and myoregulin (MRLN). Its function is as follows. This magnesium-dependent enzyme catalyzes the hydrolysis of ATP coupled with the translocation of calcium from the cytosol to the sarcoplasmic reticulum lumen. Isoform SERCA2A is involved in the regulation of the contraction/relaxation cycle. May act as a regulator of TNFSF11-mediated Ca(2+) signaling during osteoclastogenesis. The sequence is that of Sarcoplasmic/endoplasmic reticulum calcium ATPase 2 (ATP2A2) from Gallus gallus (Chicken).